We begin with the raw amino-acid sequence, 76 residues long: MAYVKKERKRIKKCKLCRDNVEYIDYKDVRKLKEFMNDKGKILPKRINGNCAKHQRMVRTAIQRARKMMLVPYVNE.

It belongs to the bacterial ribosomal protein bS18 family. In terms of assembly, part of the 30S ribosomal subunit. Forms a tight heterodimer with protein bS6.

Functionally, binds as a heterodimer with protein bS6 to the central domain of the 16S rRNA, where it helps stabilize the platform of the 30S subunit. This chain is Small ribosomal subunit protein bS18, found in Petrotoga mobilis (strain DSM 10674 / SJ95).